Here is a 341-residue protein sequence, read N- to C-terminus: Anthranilate phosphoribosyltransferase (341 aa).

Residues Gly-79, 82 to 83 (GD), Thr-87, 89 to 92 (NIST), 107 to 115 (KHGNRAVSS), and Ser-119 each bind 5-phospho-alpha-D-ribose 1-diphosphate. Gly-79 serves as a coordination point for anthranilate. Ser-91 lines the Mg(2+) pocket. Residue Asn-110 participates in anthranilate binding. Residue Arg-165 coordinates anthranilate. Mg(2+)-binding residues include Asp-224 and Glu-225.

Belongs to the anthranilate phosphoribosyltransferase family. As to quaternary structure, homodimer. Mg(2+) is required as a cofactor.

The catalysed reaction is N-(5-phospho-beta-D-ribosyl)anthranilate + diphosphate = 5-phospho-alpha-D-ribose 1-diphosphate + anthranilate. It participates in amino-acid biosynthesis; L-tryptophan biosynthesis; L-tryptophan from chorismate: step 2/5. In terms of biological role, catalyzes the transfer of the phosphoribosyl group of 5-phosphorylribose-1-pyrophosphate (PRPP) to anthranilate to yield N-(5'-phosphoribosyl)-anthranilate (PRA). This chain is Anthranilate phosphoribosyltransferase, found in Bacillus thuringiensis subsp. konkukian (strain 97-27).